Consider the following 513-residue polypeptide: Maturase K (513 aa).

Belongs to the intron maturase 2 family. MatK subfamily.

The protein resides in the plastid. Its subcellular location is the chloroplast. Usually encoded in the trnK tRNA gene intron. Probably assists in splicing its own and other chloroplast group II introns. The polypeptide is Maturase K (Cynodon dactylon (Bermuda grass)).